A 422-amino-acid chain; its full sequence is Enolase 2 (422 aa).

Gln-162 provides a ligand contact to (2R)-2-phosphoglycerate. Residue Glu-204 is the Proton donor of the active site. 3 residues coordinate Mg(2+): Asp-241, Glu-285, and Asp-312. (2R)-2-phosphoglycerate contacts are provided by Lys-337, Arg-366, Ser-367, and Lys-388. Lys-337 (proton acceptor) is an active-site residue.

Belongs to the enolase family. The cofactor is Mg(2+).

It localises to the cytoplasm. Its subcellular location is the secreted. The protein resides in the cell surface. It catalyses the reaction (2R)-2-phosphoglycerate = phosphoenolpyruvate + H2O. Its pathway is carbohydrate degradation; glycolysis; pyruvate from D-glyceraldehyde 3-phosphate: step 4/5. Catalyzes the reversible conversion of 2-phosphoglycerate (2-PG) into phosphoenolpyruvate (PEP). It is essential for the degradation of carbohydrates via glycolysis. This is Enolase 2 from Lactococcus lactis subsp. lactis (strain IL1403) (Streptococcus lactis).